We begin with the raw amino-acid sequence, 96 residues long: (4S)-4-hydroxy-5-phosphonooxypentane-2,3-dione isomerase (96 aa).

The region spanning 2 to 91 is the ABM domain; it reads HVTLVEINVK…MTGPRKKTVF (90 aa).

This sequence belongs to the LsrG family. As to quaternary structure, homodimer.

The protein resides in the cytoplasm. It catalyses the reaction (2S)-2-hydroxy-3,4-dioxopentyl phosphate = 3-hydroxy-2,4-dioxopentyl phosphate. Functionally, involved in the degradation of phospho-AI-2, thereby terminating induction of the lsr operon and closing the AI-2 signaling cycle. Catalyzes the conversion of (4S)-4-hydroxy-5-phosphonooxypentane-2,3-dione (P-DPD) to 3-hydroxy-5-phosphonooxypentane-2,4-dione (P-HPD). The sequence is that of (4S)-4-hydroxy-5-phosphonooxypentane-2,3-dione isomerase from Yersinia pseudotuberculosis serotype O:1b (strain IP 31758).